A 1238-amino-acid chain; its full sequence is Kinesin-related protein 10 (1238 aa).

The region spanning 16-374 (SMIVTVRIRP…LKYAQRAKSI (359 aa)) is the Kinesin motor domain. 116-123 (GASGAGKT) serves as a coordination point for ATP. Over residues 417 to 436 (NNNNSNNNNNNNNNNYFSNS) the composition is skewed to low complexity. The interval 417 to 503 (NNNNSNNNNN…DGEDSNNRDN (87 aa)) is disordered. Residues 437–464 (FGSCGNKNQPIKQPTPPTSLFHQQNQKY) show a composition bias toward polar residues. A compositionally biased stretch (acidic residues) spans 468 to 497 (DDDDDDDNDQEENNDEVLINEDDEEVDGED). The stretch at 527–602 (TLKKTQSIQR…NNQWRRKLQS (76 aa)) forms a coiled coil. 3 stretches are compositionally biased toward low complexity: residues 726-795 (NDIN…NIIN), 918-934 (LLPS…SSPL), and 961-971 (NNNNNNNNIAP). Disordered regions lie at residues 726–802 (NDIN…LKPR), 891–971 (EIDD…NIAP), 1134–1156 (TPTS…TTST), and 1191–1238 (ATLT…KIIK). Residues 1191–1203 (ATLTPNRNNSQIV) are compositionally biased toward polar residues. The span at 1215–1228 (PTSSSSRLLPSSRT) shows a compositional bias: low complexity. The span at 1229-1238 (TVNTSRKIIK) shows a compositional bias: polar residues.

It belongs to the TRAFAC class myosin-kinesin ATPase superfamily. Kinesin family.

The protein localises to the cytoplasm. The protein resides in the cytoskeleton. Microtubule-associated force-producing protein that plays a role in organelle transport. Its motor activity is directed toward the microtubule's plus end. Cooperates with kif8 and dynein to organize interphase microtubules. The polypeptide is Kinesin-related protein 10 (kif10) (Dictyostelium discoideum (Social amoeba)).